Consider the following 660-residue polypeptide: MANTPVNYQLTRTANAIPEIFVGGTFAEIKQNLIEWLNGQNEFLDYDFEGSRLNVLCDLLAYNTLYIQQFGNAAVYESFMRTANLRSSVVQAAQDNGYLPTSKSAAQTEIMLTCTDALNRNYITIPRGTRFLAYAKDTSVNPYNFVSREDVIAIRDKNNQYFPRLKLAQGRIVRTEIIYDKLTPIIIYDKNIDRNQVKLYVDGAEWINWTRKSMVHAGSTSTIYYMRETIDGNTEFYFGEGEISVNASEGALTANYIGGLKPTQNSTIVIEYISTNGADANGAVGFSYADTLTNITVININENPNDDPDFVGADGGGDPEDIERIRELGTIKRETQQRCVTATDYDTFVSERFGSIIQAVQTFTDSTKPGYAFIAAKPKSGLYLTTVQREDIKNYLKDYNLAPITPSIISPNYLFIKTNLKVTYALNKLQESEQWLEGQIIDKIDRYYTEDVEIFNSSFAKSKMLTYVDDADHSVIGSSATIQMVREVQNFYKTPEAGIKYNNQIKDRSMESNTFSFNSGRKVVNPDTGLEEDVLYDVRIVSTDRDSKGIGKVIIGPFASGDVTENENIQPYTGNDFNKLANSDGRDKYYVIGEINYPADVIYWNIAKINLTSEKFEVQTIELYSDPTDDVIFTRDGSLIVFENDLRPQYLTIDLEPISQ.

Belongs to the T4likevirus baseplate wedge protein gp6 family. As to quaternary structure, homodimer; each gp6 molecule in the ring interacts with its two neighbors, forming an N-terminal dimer with one and a C-terminal dimer with the other. Heterotrimer with gp7; gp6 is part of a (gp6)2-gp7 heterotrimeric molecule. The (gp6)2-gp7 heterotrimeric molecule further interacts with gp25 and gp53; the gp25-(gp6)2-gp7 module is involved in sheath contraction. Part of the baseplate macromolecular complex which consists of gp5, gp5.4, gp27 (central spike complex); gp6, gp25, gp53 (inner baseplate); gp7, gp8 (intermediate baseplate); gp9, gp10, gp11, gp12 (peripheral); gp48 and gp54 (proximal region of the tail tube).

The protein localises to the virion. In terms of biological role, baseplate protein that is located next to the tail tube (inner baseplate). Involved in the tail assembly. The gp25-(gp6)2-gp7 module is involved in sheath contraction. The chain is Baseplate wedge protein gp6 (6) from Escherichia coli (Bacteriophage T4).